The following is a 150-amino-acid chain: Large ribosomal subunit protein bL9 (150 aa).

This sequence belongs to the bacterial ribosomal protein bL9 family.

Functionally, binds to the 23S rRNA. The chain is Large ribosomal subunit protein bL9 from Polaromonas sp. (strain JS666 / ATCC BAA-500).